The following is a 326-amino-acid chain: Delta-aminolevulinic acid dehydratase (326 aa).

Residues Cys125, Cys127, and Cys135 each coordinate Zn(2+). Lys200 serves as the catalytic Schiff-base intermediate with substrate. 5-aminolevulinate is bound by residues Arg210 and Arg222. Glu238 lines the Mg(2+) pocket. Catalysis depends on Lys253, which acts as the Schiff-base intermediate with substrate. Ser279 contacts 5-aminolevulinate.

It belongs to the ALAD family. In terms of assembly, homooctamer. Requires Zn(2+) as cofactor.

It catalyses the reaction 2 5-aminolevulinate = porphobilinogen + 2 H2O + H(+). It functions in the pathway porphyrin-containing compound metabolism; protoporphyrin-IX biosynthesis; coproporphyrinogen-III from 5-aminolevulinate: step 1/4. In terms of biological role, catalyzes an early step in the biosynthesis of tetrapyrroles. Binds two molecules of 5-aminolevulinate per subunit, each at a distinct site, and catalyzes their condensation to form porphobilinogen. The chain is Delta-aminolevulinic acid dehydratase (hemB) from Methanothermobacter thermautotrophicus (strain ATCC 29096 / DSM 1053 / JCM 10044 / NBRC 100330 / Delta H) (Methanobacterium thermoautotrophicum).